The following is a 468-amino-acid chain: MSTTTKKSLESKLQQLKCHFTWNLMAGDESLDEFEDKVFNKDEFQKRECKATMCNILAFVKHRRGQNASALKELEKAEQFIQQQHPDHVEIRNIVTWGNYAWVYYHMGQLEKAQAYLDKVRQVCEKFSSPYRIESPELDCEEGWARLKCTRNQNERVKVCFEKALEKDPKNPEFTSGWAISNYRLDFWPAQQNAVDSLKQAIRMSPNSPYVKVLLALKLEMNQENQGKELVEEALREAPGETDVLRSAARFYYKTHDKDRAIQLLSQALELLPNNAYVYYYIGCFYRSKVLQIDSRRETSQNENREQLLKQAIYYLKKAEETKEMIKDSCSYLAHLYVLAEQYKEADYYFQKGFKKELTPGLKQLLHLRYGNFQFFQMKCEDKAIHQYLEGVKIRQKTKPKEKMTNKLRFIAERRRSQNGFDSKALHILAFLQELNKESQQAAKVSERGQDSERPVFSPSLHEGGNEQ.

Ser-2 carries the post-translational modification N-acetylserine. TPR repeat units follow at residues 51–89 (ATMCNILAFVKHRRGQNASALKELEKAEQFIQQQHPDHV), 90–135 (EIRN…RIES), 136–171 (PELDCEEGWARLKCTRNQNERVKVCFEKALEKDPKN), 172–208 (PEFTSGWAISNYRLDFWPAQQNAVDSLKQAIRMSPNS), 242–275 (TDVLRSAARFYYKTHDKDRAIQLLSQALELLPNN), 276–328 (AYVY…MIKD), 329–359 (SCSYLAHLYVLAEQYKEADYYFQKGFKKELT), 360–398 (PGLKQLLHLRYGNFQFFQMKCEDKAIHQYLEGVKIRQKT), and 399–441 (KPKE…ESQQ). Positions 441-468 (QAAKVSERGQDSERPVFSPSLHEGGNEQ) are disordered. Positions 445-454 (VSERGQDSER) are enriched in basic and acidic residues.

This sequence belongs to the IFIT family. As to quaternary structure, domain-swapped homodimer. Component of an interferon-dependent multiprotein complex, at least composed of IFIT1, IFIT2 and IFIT3. Interacts with IFIT1 and IFIT3. Interacts with STING1/MITA and disrupts its interaction with MAVS or TBK1. Interacts with EIF3E and EIF3C.

It is found in the cytoplasm. The protein localises to the endoplasmic reticulum. IFN-induced antiviral protein which inhibits expression of viral messenger RNAs lacking 2'-O-methylation of the 5' cap. The ribose 2'-O-methylation would provide a molecular signature to distinguish between self and non-self mRNAs by the host during viral infection. Viruses evolved several ways to evade this restriction system such as encoding their own 2'-O-methylase for their mRNAs or by stealing host cap containing the 2'-O-methylation (cap snatching mechanism). Binds AU-rich viral RNAs, with or without 5' triphosphorylation, RNA-binding is required for antiviral activity. Can promote apoptosis. The protein is Interferon-induced protein with tetratricopeptide repeats 2 (IFIT2) of Cricetulus griseus (Chinese hamster).